The chain runs to 346 residues: Probable electron transfer flavoprotein subunit alpha, mitochondrial (346 aa).

285 to 313 (LYVAIGISGAIQHLAGMKESKMIIAINKD) lines the FAD pocket.

It belongs to the ETF alpha-subunit/FixB family. Heterodimer of an alpha and a beta subunit. It depends on FAD as a cofactor.

It is found in the mitochondrion matrix. Its function is as follows. The electron transfer flavoprotein serves as a specific electron acceptor for several dehydrogenases, including five acyl-CoA dehydrogenases, glutaryl-CoA and sarcosine dehydrogenase. It transfers the electrons to the main mitochondrial respiratory chain via ETF-ubiquinone oxidoreductase (ETF dehydrogenase). This Cryptococcus gattii serotype B (strain WM276 / ATCC MYA-4071) (Filobasidiella gattii) protein is Probable electron transfer flavoprotein subunit alpha, mitochondrial (ETF1).